A 378-amino-acid chain; its full sequence is Peptide chain release factor RF2 (378 aa).

Residue Gln-253 is modified to N5-methylglutamine.

The protein belongs to the prokaryotic/mitochondrial release factor family. In terms of assembly, interacts with the ribosome. Interacts with ribosomal protein L11. Recruited to stalled E.coli ribosomes by E.coli ArfA.

It is found in the cytoplasm. Peptide chain release factor 2 directs the termination of translation in response to the peptide chain termination codons UGA and UAA. In endogenous ribosomes interacts with P-site tRNA and 23S rRNA. In the presence of truncated mRNA in the 70S ribosome, ArfA and RF2 interact such that the GGQ peptide hydrolysis motif of RF2 rises into the peptidyl-transferase center and releases the ribosome. Recruited to stalled E.coli 70S ribosomes by E.coli ArfA, but cannot be functionally accomodated in the peptidyl-transferase center. Note T.thermophilus probably does not encode arfA. The polypeptide is Peptide chain release factor RF2 (prfB) (Thermus thermophilus (strain ATCC 27634 / DSM 579 / HB8)).